We begin with the raw amino-acid sequence, 251 residues long: Imidazole glycerol phosphate synthase subunit HisF (251 aa).

Residues D12 and D131 contribute to the active site.

This sequence belongs to the HisA/HisF family. As to quaternary structure, heterodimer of HisH and HisF.

It localises to the cytoplasm. It carries out the reaction 5-[(5-phospho-1-deoxy-D-ribulos-1-ylimino)methylamino]-1-(5-phospho-beta-D-ribosyl)imidazole-4-carboxamide + L-glutamine = D-erythro-1-(imidazol-4-yl)glycerol 3-phosphate + 5-amino-1-(5-phospho-beta-D-ribosyl)imidazole-4-carboxamide + L-glutamate + H(+). Its pathway is amino-acid biosynthesis; L-histidine biosynthesis; L-histidine from 5-phospho-alpha-D-ribose 1-diphosphate: step 5/9. In terms of biological role, IGPS catalyzes the conversion of PRFAR and glutamine to IGP, AICAR and glutamate. The HisF subunit catalyzes the cyclization activity that produces IGP and AICAR from PRFAR using the ammonia provided by the HisH subunit. This is Imidazole glycerol phosphate synthase subunit HisF from Streptomyces griseus subsp. griseus (strain JCM 4626 / CBS 651.72 / NBRC 13350 / KCC S-0626 / ISP 5235).